The primary structure comprises 611 residues: Immunoglobulin superfamily member 8 (611 aa).

The first 25 residues, 1–25, serve as a signal peptide directing secretion; sequence MGVPSPTPLSSLLLLLLILGTRCYA. 4 Ig-like C2-type domains span residues 26-143, 160-284, 301-422, and 429-554; these read RQVH…AKVE, PRGR…WVQV, SQLA…EAAS, and PVHV…ADYS. Over 26 to 577 the chain is Extracellular; the sequence is RQVHVPRGPL…VYPYTHAVDT (552 aa). A disulfide bridge links Cys47 with Cys125. Asn48 and Asn137 each carry an N-linked (GlcNAc...) asparagine glycan. Cysteines 184 and 268 form a disulfide. The EWI motif signature appears at 272 to 274; it reads EWI. Intrachain disulfides connect Cys324–Cys404 and Cys460–Cys542. N-linked (GlcNAc...) asparagine glycosylation occurs at Asn325. Ser516 bears the Phosphoserine mark. A helical transmembrane segment spans residues 578-598; sequence LFVPLLVGTGVALVTGASVLA. The Cytoplasmic portion of the chain corresponds to 599–611; sequence TITCCFMKRMRKR. 2 S-palmitoyl cysteine lipidation sites follow: Cys602 and Cys603.

Interacts directly with CD82 and CD9/tetraspanin-29. Also interacts with integrin alpha-3/beta-1 and integrin alpha-4/beta-1. Part of a complex composed of CD9, PTGFRN and CD81. Interacts with CD81/tetraspanin-28. In terms of tissue distribution, expressed in lymphocytes as well as in many tissues with higher expression in brain. Detected in all regions of the brain with weak expression in the pituitary. Expressed selectively by neurons but not by glial cells. Expressed in myoblasts (at protein level).

Its subcellular location is the cell membrane. Its function is as follows. Member of the immunoglobulin superfamily (IgSF) that links tetraspanin-enriched microdomains to the actin cytoskeleton and plays several important roles in innate and adaptive immunity. Acts as an inducible receptor of HSPA8 on dendritic cells to enhance the CCL21/SLC-dependent migration of activated mature dendritic cells while attenuating their antigen-specific stimulatory capacities. In complex with alpha-actinins ACTN1 and ACTN4, regulates actin dynamics in the immune synapse and subsequent T-cell activation. Inhibits the entry of several viruses such as hepatitis C Virus (HCV) or HIV-1. Mechanistically, promotes a change in CD81 organization at the plasma membrane by significantly restricting its diffusion which in turn influences CD81 interaction with Claudin-1/CLDN1, preventing CLDN1 from acting as a co-receptor required for HCV entry. Accumulates at the presynaptic terminal, the producer cell side of the virological synapse, to prevent HIV-1 Env-mediated cell-cell fusion. Highly expressed on malignant cells with antigen presentation defects, interacts with NK receptor KLRA9 to suppress NK-cell cytotoxicity. May participate in the regulation of neurite outgrowth and maintenance of the neural network in the adult brain. The chain is Immunoglobulin superfamily member 8 (Igsf8) from Mus musculus (Mouse).